The sequence spans 331 residues: Glycerol-3-phosphate dehydrogenase [NAD(P)+] (331 aa).

Positions 14, 34, and 107 each coordinate NADPH. 3 residues coordinate sn-glycerol 3-phosphate: Lys-107, Gly-135, and Ser-137. Residue Ala-139 participates in NADPH binding. Sn-glycerol 3-phosphate-binding residues include Lys-190, Asp-243, Ser-253, Arg-254, and Asn-255. Lys-190 serves as the catalytic Proton acceptor. Arg-254 contributes to the NADPH binding site. Residues Val-278 and Glu-280 each coordinate NADPH.

The protein belongs to the NAD-dependent glycerol-3-phosphate dehydrogenase family.

It is found in the cytoplasm. It catalyses the reaction sn-glycerol 3-phosphate + NAD(+) = dihydroxyacetone phosphate + NADH + H(+). The catalysed reaction is sn-glycerol 3-phosphate + NADP(+) = dihydroxyacetone phosphate + NADPH + H(+). It functions in the pathway membrane lipid metabolism; glycerophospholipid metabolism. Functionally, catalyzes the reduction of the glycolytic intermediate dihydroxyacetone phosphate (DHAP) to sn-glycerol 3-phosphate (G3P), the key precursor for phospholipid synthesis. The sequence is that of Glycerol-3-phosphate dehydrogenase [NAD(P)+] from Caulobacter vibrioides (strain ATCC 19089 / CIP 103742 / CB 15) (Caulobacter crescentus).